The primary structure comprises 347 residues: MDGEDIPDFSSLKEETAYWKELSLKYKQSFQEARDELVEFQEGSRELEAELEAQLVQAEQRNRDLQADNQRLKYEVEALKEKLEHQYAQSYKQVSVLEDDLSQTRAIKEQLHKYVRELEQANDDLERAKRATIVSLEDFEQRLNQAIERNAFLESELDEKESLLVSVQRLKDEARDLRQELAVRERQQEVTRKSAPSSPTLDCEKMDSAVQASLSLPATPVGKGTENTFPSPKAIPNGFGTSPLTPSARISALNIVGDLLRKVGALESKLAACRNFAKDQASRKSYISGNVNCGVLNGNGTKFSRSGHTSFFDKGAVNGFDPAPPPPDPGLGSSRPSSAPGMLPLSV.

Residues 28–190 are a coiled coil; it reads QSFQEARDEL…LAVRERQQEV (163 aa). Residues 56–166 form a self-association region; sequence VQAEQRNRDL…LDEKESLLVS (111 aa). Residues 64 to 189 form an interaction with KATNB1 region; the sequence is DLQADNQRLK…ELAVRERQQE (126 aa). Positions 114-133 are required for interaction with PAFAH1B1; that stretch reads YVRELEQANDDLERAKRATI. Residues 175 to 347 are interaction with CENPF; sequence RDLRQELAVR…SAPGMLPLSV (173 aa). The interval 189-256 is interaction with YWHAE; that stretch reads EVTRKSAPSS…SARISALNIV (68 aa). The tract at residues 191–347 is interaction with NEFL; the sequence is TRKSAPSSPT…SAPGMLPLSV (157 aa). An interaction with KATNA1 region spans residues 195 to 256; sequence APSSPTLDCE…SARISALNIV (62 aa). Position 215 is a phosphoserine (Ser-215). Phosphothreonine; by CDK1 and MAPK1 is present on Thr-219. Phosphoserine is present on Ser-231. Positions 241-280 are interaction with DISC1; sequence TSPLTPSARISALNIVGDLLRKVGALESKLAACRNFAKDQ. A Phosphoserine; by CDK1 modification is found at Ser-242. Thr-245 bears the Phosphothreonine; by CDK1 and MAPK1 mark. Positions 256-291 are required for localization to the centrosome and interaction with dynein, dynactin, tubulin gamma, PCM1 and PCNT; sequence VGDLLRKVGALESKLAACRNFAKDQASRKSYISGNV. Cys-273 carries the S-palmitoyl cysteine; by ZDHHC2, ZDHHC3 and ZDHHC7 lipid modification. The disordered stretch occupies residues 314-347; that stretch reads KGAVNGFDPAPPPPDPGLGSSRPSSAPGMLPLSV. At Ser-346 the chain carries Phosphoserine.

Belongs to the nudE family. Self-associates. Interacts with DISC1, dynein, dynactin, tubulin gamma, KATNA1, KATNB1, microtubules, PAFAH1B1, PCM1, PCNT, and YWHAE. Interacts directly with NEFL and indirectly with NEFH. Interacts (via C-terminus) with CENPF. Interacts with ZNF365. Interacts with PLEKHM1 (via N- and C-terminus). Interacts with GTP-bound RAB9A; the interaction may lead to RAB9A-dynein motor tethering. Post-translationally, phosphorylated in mitosis. Can be phosphorylated by CDK1, CDK5 and MAPK1. Phosphorylation by CDK5 promotes interaction with KATNA1 and YWHAE. In terms of processing, palmitoylation at Cys-273 reduces affinity for dynein.

The protein localises to the cytoplasm. Its subcellular location is the cytoskeleton. It localises to the microtubule organizing center. It is found in the centrosome. The protein resides in the chromosome. The protein localises to the centromere. Its subcellular location is the kinetochore. It localises to the spindle. Functionally, required for organization of the cellular microtubule array and microtubule anchoring at the centrosome. May regulate microtubule organization at least in part by targeting the microtubule severing protein KATNA1 to the centrosome. Also positively regulates the activity of the minus-end directed microtubule motor protein dynein. May enhance dynein-mediated microtubule sliding by targeting dynein to the microtubule plus ends. Required for several dynein- and microtubule-dependent processes such as the maintenance of Golgi integrity, the centripetal motion of secretory vesicles and the coupling of the nucleus and centrosome. Also required during brain development for the migration of newly formed neurons from the ventricular/subventricular zone toward the cortical plate. Required for mitosis in some cell types but appears to be dispensible for mitosis in cortical neuronal progenitors, which instead requires NDE1. Facilitates the polymerization of neurofilaments from the individual subunits NEFH and NEFL. Positively regulates lysosome peripheral distribution and ruffled border formation in osteoclasts. Plays a role, together with DISC1, in the regulation of neurite outgrowth. May act as a RAB9A/B effector that tethers RAB9-associated late endosomes to the dynein motor for their retrograde transport to the trans-Golgi network. In Macaca fascicularis (Crab-eating macaque), this protein is Nuclear distribution protein nudE-like 1 (NDEL1).